The chain runs to 620 residues: 1-deoxy-D-xylulose-5-phosphate synthase (620 aa).

Residues His-80 and 121–123 (GHS) each bind thiamine diphosphate. A Mg(2+)-binding site is contributed by Asp-152. Thiamine diphosphate is bound by residues 153–154 (GA), Asn-181, Tyr-288, and Glu-370. Residue Asn-181 coordinates Mg(2+).

It belongs to the transketolase family. DXPS subfamily. As to quaternary structure, homodimer. Requires Mg(2+) as cofactor. The cofactor is thiamine diphosphate.

The enzyme catalyses D-glyceraldehyde 3-phosphate + pyruvate + H(+) = 1-deoxy-D-xylulose 5-phosphate + CO2. It functions in the pathway metabolic intermediate biosynthesis; 1-deoxy-D-xylulose 5-phosphate biosynthesis; 1-deoxy-D-xylulose 5-phosphate from D-glyceraldehyde 3-phosphate and pyruvate: step 1/1. Functionally, catalyzes the acyloin condensation reaction between C atoms 2 and 3 of pyruvate and glyceraldehyde 3-phosphate to yield 1-deoxy-D-xylulose-5-phosphate (DXP). The sequence is that of 1-deoxy-D-xylulose-5-phosphate synthase from Klebsiella pneumoniae (strain 342).